The primary structure comprises 215 residues: Cytochrome b6 (215 aa).

The helical transmembrane segment at 32 to 52 (IFYCLGGITLTCFLVQVATGF) threads the bilayer. Cys-35 is a binding site for heme c. Positions 86 and 100 each coordinate heme b. The next 3 helical transmembrane spans lie at 90 to 110 (ASMMVLMMILHVFRVYLTGGF), 116 to 136 (LTWVTGVVLGVLTATFGVTGY), and 186 to 206 (LHTFVLPLLTAVFMLMHFLMI). The heme b site is built by His-187 and His-202.

This sequence belongs to the cytochrome b family. PetB subfamily. As to quaternary structure, the 4 large subunits of the cytochrome b6-f complex are cytochrome b6, subunit IV (17 kDa polypeptide, PetD), cytochrome f and the Rieske protein, while the 4 small subunits are PetG, PetL, PetM and PetN. The complex functions as a dimer. It depends on heme b as a cofactor. Heme c is required as a cofactor.

The protein resides in the plastid. Its subcellular location is the chloroplast thylakoid membrane. In terms of biological role, component of the cytochrome b6-f complex, which mediates electron transfer between photosystem II (PSII) and photosystem I (PSI), cyclic electron flow around PSI, and state transitions. The chain is Cytochrome b6 from Pisum sativum (Garden pea).